Reading from the N-terminus, the 346-residue chain is D-alanine--D-alanine ligase (346 aa).

Residues 133 to 326 enclose the ATP-grasp domain; that stretch reads KFLAQKAGVK…LANSLPKERE (194 aa). 159–209 contacts ATP; that stretch reads YPIILKPARLGSSIGVSVVHDDSELAYAKDVAFEFDKDVLVEPFIKGVKEY. Positions 282, 294, and 296 each coordinate Mg(2+).

This sequence belongs to the D-alanine--D-alanine ligase family. Requires Mg(2+) as cofactor. It depends on Mn(2+) as a cofactor.

It localises to the cytoplasm. It catalyses the reaction 2 D-alanine + ATP = D-alanyl-D-alanine + ADP + phosphate + H(+). It functions in the pathway cell wall biogenesis; peptidoglycan biosynthesis. Functionally, cell wall formation. The polypeptide is D-alanine--D-alanine ligase (Campylobacter concisus (strain 13826)).